A 418-amino-acid chain; its full sequence is E3 ubiquitin-protein ligase makorin-2 (418 aa).

2 C3H1-type zinc fingers span residues 2–29 (NTKHVTCRYFLHGVCREGGRCLFSHDLA) and 31–58 (SKPSTVCRFYQRGQCAYGARCRYDHVKP). Residues 76–100 (ESTPPLLPTQEAAAPVTKSAPQRRE) form a disordered region. The C3H1-type 3 zinc finger occupies 164-191 (DAPQQLCPFAQAGGCHYGESCPYIHGNV). A makorin-type Cys-His region spans residues 192–221 (CEICGLQVLHPYDQEQRGHHEKLCMANFER). An RING-type zinc finger spans residues 237-291 (CSICMERVYDKQSPSERRFGILSNCHHTYCLACIRQWRCARQFENPVIKSCPECR). The segment at 320 to 349 (GMGKKACKYFDQGRGTCPFGGKCLYLHAYP) adopts a C3H1-type 4 zinc-finger fold.

Its subcellular location is the cytoplasm. The protein resides in the nucleus. It catalyses the reaction S-ubiquitinyl-[E2 ubiquitin-conjugating enzyme]-L-cysteine + [acceptor protein]-L-lysine = [E2 ubiquitin-conjugating enzyme]-L-cysteine + N(6)-ubiquitinyl-[acceptor protein]-L-lysine.. Its pathway is protein modification; protein ubiquitination. Its function is as follows. E3 ubiquitin ligase catalyzing the covalent attachment of ubiquitin moieties onto substrate proteins. Inhibits neurogenesis and axis formation during embryonic development by modulating the phosphatidylinositol 3-kinase (PI3K) pathway. Acts downstream of PI3K and akt1 to up-regulate gsk3b mRNA expression. This Xenopus tropicalis (Western clawed frog) protein is E3 ubiquitin-protein ligase makorin-2 (mkrn2).